The sequence spans 425 residues: Elongation factor 1-alpha (425 aa).

The region spanning 5-221 (KPHMNLAVIG…NALSEPEKPT (217 aa)) is the tr-type G domain. Positions 14–21 (GHIDHGKS) are G1. Residue 14 to 21 (GHIDHGKS) coordinates GTP. Ser21 lines the Mg(2+) pocket. The tract at residues 70 to 74 (GITID) is G2. The segment at 91–94 (DCPG) is G3. GTP-binding positions include 91–95 (DCPGH) and 146–149 (NKMD). Positions 146-149 (NKMD) are G4. Positions 185-187 (SAF) are G5.

The protein belongs to the TRAFAC class translation factor GTPase superfamily. Classic translation factor GTPase family. EF-Tu/EF-1A subfamily.

The protein localises to the cytoplasm. It catalyses the reaction GTP + H2O = GDP + phosphate + H(+). Its function is as follows. GTP hydrolase that promotes the GTP-dependent binding of aminoacyl-tRNA to the A-site of ribosomes during protein biosynthesis. The protein is Elongation factor 1-alpha of Methanoculleus marisnigri (strain ATCC 35101 / DSM 1498 / JR1).